The following is a 473-amino-acid chain: Lactate utilization protein B 2 (473 aa).

4Fe-4S ferredoxin-type domains follow at residues 302–332 (GSEFRSILQCIRCAACVNVCPVYRHVGGHSY) and 351–380 (YDDYKELPYASSLCGACTEACPVKIPLHDL). [4Fe-4S] cluster is bound by residues C311, C314, C317, C321, C364, C367, and C371.

The protein belongs to the LutB/YkgF family.

Its function is as follows. Is involved in L-lactate degradation and allows cells to grow with lactate as the sole carbon source. Has probably a role as an electron transporter during oxidation of L-lactate. This is Lactate utilization protein B 2 from Bacillus mycoides (strain KBAB4) (Bacillus weihenstephanensis).